The following is a 394-amino-acid chain: MVMFKKIKSFEVVFNDPEKVYGSGEKVAGRVTVEVCEVTRVKAVRILACGVAKVLWMQGSQQCKQTLDYLRYEDTLLLEDQPTGENEMVIMRPGNKYEYKFGFELPQGPLGTSFKGKYGCVDYWVKAFLDRPSQPTQEAKKNFEVMDLVDVNTPDLMAPVSAKKEKKVSCMFIPDGRVSVSARIDRKGFCEGDDISIHADFENTCSRIVVPKAAIVARHTYLANGQTKVLTQKLSSVRGNHIISGTCASWRGKSLRVQKIRPSILGCNILRVEYSLLIYVSVPGSKKVILDLPLVIGSRSGLSSRTSSMASRTSSEMSWIDLNIPDTPEAPPCYMDVIPEDHRLESPTTPLLDDVDDSQDSPIFMYAPEFQFMPPPTYTEVDPCVLNNNNNNVQ.

Residue K212 forms a Glycyl lysine isopeptide (Lys-Gly) (interchain with G-Cter in ubiquitin) linkage. S361 carries the phosphoserine modification.

It belongs to the arrestin family. As to quaternary structure, homodimer; disulfide-linked. Interacts with TXN/thioredoxin through its redox-active site. Interacts with transcriptional repressors ZBTB16, ZBTB32 and HDAC1. Interacts with DDIT4. In terms of processing, ubiquitinated; undergoes heterotypic 'Lys-48'-/'Lys-63'-branched polyubiquitination catalyzed by ITCH and UBR5 resulting in proteasomal degradation. Deubiquitinated by USP5, leading to TXNIP stabilization.

It is found in the cytoplasm. In terms of biological role, may act as an oxidative stress mediator by inhibiting thioredoxin activity or by limiting its bioavailability. Interacts with COPS5 and restores COPS5-induced suppression of CDKN1B stability, blocking the COPS5-mediated translocation of CDKN1B from the nucleus to the cytoplasm. Functions as a transcriptional repressor, possibly by acting as a bridge molecule between transcription factors and corepressor complexes, and over-expression will induce G0/G1 cell cycle arrest. Required for the maturation of natural killer cells. Acts as a suppressor of tumor cell growth. Inhibits the proteasomal degradation of DDIT4, and thereby contributes to the inhibition of the mammalian target of rapamycin complex 1 (mTORC1). The sequence is that of Thioredoxin-interacting protein (Txnip) from Rattus norvegicus (Rat).